The chain runs to 354 residues: Zinc finger protein 346 (354 aa).

Matrin-type zinc fingers lie at residues 34-64 (TQCK…KVRR), 95-125 (KCCP…NLRL), 165-195 (KFCK…QETK), and 232-262 (FSCD…QLMS). Residues Cys-36, Cys-39, His-52, His-58, Cys-97, Cys-100, His-113, and His-119 each coordinate Zn(2+). The disordered stretch occupies residues 263–343 (MTPLSKEGPP…QPYVREDMMG (81 aa)). Low complexity-rich tracts occupy residues 270 to 289 (GPPA…TGGA) and 310 to 323 (GPSS…MGGL). The span at 324 to 333 (MPPPYPPPHS) shows a compositional bias: pro residues.

It is found in the nucleus. Its subcellular location is the cytoplasm. Binds preferentially to dsRNA, but also to RNA-DNA hybrids. This chain is Zinc finger protein 346, found in Xenopus tropicalis (Western clawed frog).